A 433-amino-acid chain; its full sequence is Zuotin (433 aa).

Serine 50 carries the post-translational modification Phosphoserine. Residues 98-170 enclose the J domain; the sequence is LYAAMGLSKL…RAQYDSCDFV (73 aa). The span at 292 to 330 shows a compositional bias: basic and acidic residues; that stretch reads EEKKEKERRKWEREAGARAEAEAKAKAEAEAKAKAESEA. The interval 292–357 is disordered; the sequence is EEKKEKERRK…KAAKKKNKRA (66 aa).

As to quaternary structure, RAC is a heterodimer of the Hsp70/DnaK-type chaperone SSZ1 and the Hsp40/DnaJ-type chaperone ZUO1. RAC associates with ribosomes via ZUO1.

It localises to the cytoplasm. Functionally, component of the ribosome-associated complex (RAC), a heterodimeric chaperone complex involved in regulation of accurate translation termination and in folding or maintaining nascent polypeptides in a folding-competent state. RAC stimulates the ATPase activity of the ribosome-associated pool of Hsp70-type chaperones SSB1/SSB2 that bind to the nascent polypeptide chain. ZUO1 can act as a J-protein for SSB1/SSB2 only when associated with SSZ1. The protein is Zuotin (ZUO1) of Saccharomyces cerevisiae (strain ATCC 204508 / S288c) (Baker's yeast).